The sequence spans 450 residues: Asparagine--tRNA ligase (450 aa).

The protein belongs to the class-II aminoacyl-tRNA synthetase family. Homodimer.

Its subcellular location is the cytoplasm. It catalyses the reaction tRNA(Asn) + L-asparagine + ATP = L-asparaginyl-tRNA(Asn) + AMP + diphosphate + H(+). The polypeptide is Asparagine--tRNA ligase (Mycoplasmopsis pulmonis (strain UAB CTIP) (Mycoplasma pulmonis)).